The following is a 261-amino-acid chain: uncharacterized protein (261 aa).

Positions 1–22 (MIHSKKLTLGICLVLLIILIGG) are cleaved as a signal peptide. C23 carries N-palmitoyl cysteine lipidation. C23 is lipidated: S-diacylglycerol cysteine.

This sequence belongs to the staphylococcal tandem lipoprotein family.

The protein localises to the cell membrane. This is an uncharacterized protein from Staphylococcus aureus (strain USA300).